The following is a 471-amino-acid chain: Metalloprotease TIKI homolog (471 aa).

A signal peptide spans 1–24 (MAAFTLWILVLNVFLLGFQARKLA). Residues 25 to 449 (SNLKFPIQKC…SRKAAASCTP (425 aa)) lie on the Extracellular side of the membrane. N226, N235, N284, and N342 each carry an N-linked (GlcNAc...) asparagine glycan. Over residues 369-402 (KAKKSLNTRRERRKGCRGRRKKSKRCQKKKKRKR) the composition is skewed to basic residues. The tract at residues 369-406 (KAKKSLNTRRERRKGCRGRRKKSKRCQKKKKRKRPDYS) is disordered. A helical transmembrane segment spans residues 450-470 (IWTVSLALTCAVTCLLTYSGF). Residue R471 is a topological domain, cytoplasmic.

The protein belongs to the TIKI family. The cofactor is Mn(2+). It depends on Co(2+) as a cofactor.

It localises to the membrane. In terms of biological role, metalloprotease. In Nematostella vectensis (Starlet sea anemone), this protein is Metalloprotease TIKI homolog.